The primary structure comprises 221 residues: METEAIENIPRVCLPQIGAPAPDFKANSTFGPIKLSDYRGKWVVLFSHPGDFTPVCTTEFIAFTQVYTSFVERNVQLIGLSVDSNPSHLAWVENIYKTTGVEIPFPIIEDKDMRIAKLYGMISPAETSTSAVRAVFIIDDKQILRLILYYPLEIGRNIQEIIRIIDALQTVDKYKVLAPANWYPGMPVIVPPPKTYPELKQRLKNVEGYTCTDWYLCYKKV.

Positions 15 to 170 (PQIGAPAPDF…IIRIIDALQT (156 aa)) constitute a Thioredoxin domain. Cys-56 acts as the Cysteine sulfenic acid (-SOH) intermediate in catalysis. Arg-133 is a binding site for substrate. A disulfide bridge connects residues Cys-211 and Cys-217.

The protein belongs to the peroxiredoxin family. Prx6 subfamily. As to quaternary structure, homodecamer. Pentamer of dimers that assemble into a ring structure.

It localises to the cytoplasm. It catalyses the reaction a hydroperoxide + [thioredoxin]-dithiol = an alcohol + [thioredoxin]-disulfide + H2O. Its function is as follows. Thiol-specific peroxidase that catalyzes the reduction of hydrogen peroxide and organic hydroperoxides to water and alcohols, respectively. Plays a role in cell protection against oxidative stress by detoxifying peroxides. The protein is Peroxiredoxin 2 of Caldanaerobacter subterraneus subsp. tengcongensis (strain DSM 15242 / JCM 11007 / NBRC 100824 / MB4) (Thermoanaerobacter tengcongensis).